The following is a 121-amino-acid chain: Basic phospholipase A2 homolog BaTX (121 aa).

Cystine bridges form between cysteine 26–cysteine 115, cysteine 28–cysteine 44, cysteine 43–cysteine 95, cysteine 49–cysteine 121, cysteine 50–cysteine 88, cysteine 57–cysteine 81, and cysteine 75–cysteine 86. The tract at residues 105 to 117 is important for membrane-damaging activities in eukaryotes and bacteria; heparin-binding; it reads KKYRYYLKPLCKK.

The protein belongs to the phospholipase A2 family. Group II subfamily. K49 sub-subfamily. As to quaternary structure, homodimer; non-covalently linked. As to expression, expressed by the venom gland.

The protein localises to the secreted. Functionally, snake venom phospholipase A2 homolog that lacks enzymatic activity. Is myotoxic and displays edema-inducing activities. In vitro, produced time-dependent, irreversible neuromuscular blockade in isolated mouse phrenic nerve-diaphragm and chick biventer cervicis preparations. A model of myotoxic mechanism has been proposed: an apo Lys49-PLA2 is activated by the entrance of a hydrophobic molecule (e.g. fatty acid) at the hydrophobic channel of the protein leading to a reorientation of a monomer. This reorientation causes a transition between 'inactive' to 'active' states, causing alignment of C-terminal and membrane-docking sites (MDoS) side-by-side and putting the membrane-disruption sites (MDiS) in the same plane, exposed to solvent and in a symmetric position for both monomers. The MDoS region stabilizes the toxin on membrane by the interaction of charged residues with phospholipid head groups. Subsequently, the MDiS region destabilizes the membrane with penetration of hydrophobic residues. This insertion causes a disorganization of the membrane, allowing an uncontrolled influx of ions (i.e. calcium and sodium), and eventually triggering irreversible intracellular alterations and cell death. The chain is Basic phospholipase A2 homolog BaTX from Bothrops alternatus (Urutu).